Consider the following 313-residue polypeptide: N-acetyl-gamma-glutamyl-phosphate reductase (313 aa).

Cys117 is a catalytic residue.

It belongs to the NAGSA dehydrogenase family. Type 2 subfamily.

Its subcellular location is the cytoplasm. It catalyses the reaction N-acetyl-L-glutamate 5-semialdehyde + phosphate + NADP(+) = N-acetyl-L-glutamyl 5-phosphate + NADPH + H(+). The protein operates within amino-acid biosynthesis; L-arginine biosynthesis; N(2)-acetyl-L-ornithine from L-glutamate: step 3/4. Catalyzes the NADPH-dependent reduction of N-acetyl-5-glutamyl phosphate to yield N-acetyl-L-glutamate 5-semialdehyde. This chain is N-acetyl-gamma-glutamyl-phosphate reductase, found in Burkholderia cenocepacia (strain HI2424).